The following is a 901-amino-acid chain: HTH-type transcriptional regulator MalT (901 aa).

39–46 (SPAGYGKT) serves as a coordination point for ATP. The region spanning 829 to 894 (ELIHTSPLTQ…AAVQHAQKLL (66 aa)) is the HTH luxR-type domain. A DNA-binding region (H-T-H motif) is located at residues 853–872 (NEQIAGELEVAATTIKTHIR).

Belongs to the MalT family. In terms of assembly, monomer in solution. Oligomerizes to an active state in the presence of the positive effectors ATP and maltotriose.

With respect to regulation, activated by ATP and maltotriose, which are both required for DNA binding. Functionally, positively regulates the transcription of the maltose regulon whose gene products are responsible for uptake and catabolism of malto-oligosaccharides. Specifically binds to the promoter region of its target genes, recognizing a short DNA motif called the MalT box. The sequence is that of HTH-type transcriptional regulator MalT from Shigella sonnei (strain Ss046).